Here is a 266-residue protein sequence, read N- to C-terminus: F-box/kelch-repeat protein At4g39560 (266 aa).

The 47-residue stretch at 24–70 folds into the F-box domain; it reads STQILSLPVDLLISILARVSRLDYPILSLVSKSFRSLIASPELYETR. Kelch repeat units follow at residues 130-176, 178-223, and 226-266; these read DIYN…VIDG, IYVA…KSAV, and EAIC…LLVA.

The protein is F-box/kelch-repeat protein At4g39560 of Arabidopsis thaliana (Mouse-ear cress).